Consider the following 424-residue polypeptide: O-seryl-dTMP PLP-dependent decarboxylase (424 aa).

It belongs to the pyridoxal-phosphate-dependent aminodecarboxylase family.

The enzyme catalyses 5-O-(L-seryl)-dTMP in DNA + H(+) = 5-aminoethoxy-methyl-dUMP in DNA + CO2. Functionally, converts 5-O-serinylthymidine (O-SerT) into 5-aminoethoxy-2'-deoxymethyluridine (5-NeOmdU) as a step in the pathway leading to thymidine hypermodifications in the viral genome. As a final result of the pathway of hypermodification, 5-NeOmdU substitutes for about 40% of the thymidines in the viral DNA. These modifications probably prevent degradation of viral genome by the host restriction-modification antiviral defense system. This chain is O-seryl-dTMP PLP-dependent decarboxylase, found in Salmonella phage ViI.